Reading from the N-terminus, the 374-residue chain is Deoxyguanosinetriphosphate triphosphohydrolase-like protein (374 aa).

The region spanning 65–196 (RLTHSLEVAQ…ANLADEIAYN (132 aa)) is the HD domain.

Belongs to the dGTPase family. Type 2 subfamily.

The sequence is that of Deoxyguanosinetriphosphate triphosphohydrolase-like protein (dgt) from Nitrosomonas europaea (strain ATCC 19718 / CIP 103999 / KCTC 2705 / NBRC 14298).